A 390-amino-acid chain; its full sequence is Succinate--CoA ligase [ADP-forming] subunit beta (390 aa).

The ATP-grasp domain maps to 9–245 (KELLSRYGLP…KSQENEREVK (237 aa)). ATP-binding positions include Lys-46, 53–55 (GRG), Glu-100, Tyr-103, and Glu-108. Mg(2+)-binding residues include Asn-200 and Asp-214. Substrate is bound by residues Asn-265 and 322–324 (GIV).

The protein belongs to the succinate/malate CoA ligase beta subunit family. Heterotetramer of two alpha and two beta subunits. Requires Mg(2+) as cofactor.

The enzyme catalyses succinate + ATP + CoA = succinyl-CoA + ADP + phosphate. The catalysed reaction is GTP + succinate + CoA = succinyl-CoA + GDP + phosphate. It participates in carbohydrate metabolism; tricarboxylic acid cycle; succinate from succinyl-CoA (ligase route): step 1/1. Its function is as follows. Succinyl-CoA synthetase functions in the citric acid cycle (TCA), coupling the hydrolysis of succinyl-CoA to the synthesis of either ATP or GTP and thus represents the only step of substrate-level phosphorylation in the TCA. The beta subunit provides nucleotide specificity of the enzyme and binds the substrate succinate, while the binding sites for coenzyme A and phosphate are found in the alpha subunit. The chain is Succinate--CoA ligase [ADP-forming] subunit beta from Chromobacterium violaceum (strain ATCC 12472 / DSM 30191 / JCM 1249 / CCUG 213 / NBRC 12614 / NCIMB 9131 / NCTC 9757 / MK).